Reading from the N-terminus, the 387-residue chain is Probable WRKY transcription factor 36 (387 aa).

The segment at residues 197-264 (CEDPSINDGC…YEGNHDHPLP (68 aa)) is a DNA-binding region (WRKY). The disordered stretch occupies residues 322-366 (RPNYPNQLPDDYPLSSSSFSLNFSSPDPPPPSSHDHTLNFSGLRT). Residues 329–346 (LPDDYPLSSSSFSLNFSS) show a composition bias toward low complexity.

It localises to the nucleus. Functionally, transcription factor. Interacts specifically with the W box (5'-(T)TGAC[CT]-3'), a frequently occurring elicitor-responsive cis-acting element. This is Probable WRKY transcription factor 36 (WRKY36) from Arabidopsis thaliana (Mouse-ear cress).